The following is a 387-amino-acid chain: 3-ketoacyl-CoA thiolase (387 aa).

Cys-91 (acyl-thioester intermediate) is an active-site residue. Residues His-343 and Cys-373 each act as proton acceptor in the active site.

It belongs to the thiolase-like superfamily. Thiolase family. Heterotetramer of two alpha chains (FadB) and two beta chains (FadA).

It is found in the cytoplasm. The catalysed reaction is an acyl-CoA + acetyl-CoA = a 3-oxoacyl-CoA + CoA. The protein operates within lipid metabolism; fatty acid beta-oxidation. Catalyzes the final step of fatty acid oxidation in which acetyl-CoA is released and the CoA ester of a fatty acid two carbons shorter is formed. The polypeptide is 3-ketoacyl-CoA thiolase (Salmonella paratyphi A (strain ATCC 9150 / SARB42)).